The sequence spans 313 residues: Flagellin (313 aa).

Coiled-coil stretches lie at residues 5-33 (INTN…ERLS) and 97-117 (VQSE…KEVT). Tandem repeats lie at residues 179–197 (KEAV…VPAD), 199–217 (KNGV…VKAQ), 255–259 (VNNLN), and 262–266 (VNNLS). A 2 X 19 AA approximate tandem repeats region spans residues 179-217 (KEAVAAKPAVPAQPAVPADPKNGVAAKPAVPAQPEVKAQ). Residues 190 to 199 (AQPAVPADPK) are compositionally biased toward low complexity. The segment at 190 to 211 (AQPAVPADPKNGVAAKPAVPAQ) is disordered. Positions 252–298 (ESTVNNLNNTVNNLSAARSRIEDADYAVEVSNMSRGQILQQAGTSVL) form a coiled coil. Residues 255 to 266 (VNNLNNTVNNLS) form a 2 X 5 AA approximate repeats of V-N-N-L-N region.

The protein belongs to the bacterial flagellin family.

The protein resides in the secreted. The protein localises to the bacterial flagellum. In terms of biological role, flagellin is the subunit protein which polymerizes to form the filaments of bacterial flagella. The sequence is that of Flagellin (fliC) from Xenorhabdus nematophila (Achromobacter nematophilus).